The following is a 325-amino-acid chain: 5-dehydro-2-deoxygluconokinase (325 aa).

This sequence belongs to the carbohydrate kinase PfkB family.

It catalyses the reaction 5-dehydro-2-deoxy-D-gluconate + ATP = 6-phospho-5-dehydro-2-deoxy-D-gluconate + ADP + H(+). The protein operates within polyol metabolism; myo-inositol degradation into acetyl-CoA; acetyl-CoA from myo-inositol: step 5/7. Its function is as follows. Catalyzes the phosphorylation of 5-dehydro-2-deoxy-D-gluconate (2-deoxy-5-keto-D-gluconate or DKG) to 6-phospho-5-dehydro-2-deoxy-D-gluconate (DKGP). This Bacillus subtilis (strain 168) protein is 5-dehydro-2-deoxygluconokinase (iolC).